We begin with the raw amino-acid sequence, 484 residues long: Glutamyl-tRNA(Gln) amidotransferase subunit A (484 aa).

Catalysis depends on charge relay system residues Lys76 and Ser151. Catalysis depends on Ser175, which acts as the Acyl-ester intermediate.

The protein belongs to the amidase family. GatA subfamily. In terms of assembly, heterotrimer of A, B and C subunits.

It catalyses the reaction L-glutamyl-tRNA(Gln) + L-glutamine + ATP + H2O = L-glutaminyl-tRNA(Gln) + L-glutamate + ADP + phosphate + H(+). Functionally, allows the formation of correctly charged Gln-tRNA(Gln) through the transamidation of misacylated Glu-tRNA(Gln) in organisms which lack glutaminyl-tRNA synthetase. The reaction takes place in the presence of glutamine and ATP through an activated gamma-phospho-Glu-tRNA(Gln). In Halorhodospira halophila (strain DSM 244 / SL1) (Ectothiorhodospira halophila (strain DSM 244 / SL1)), this protein is Glutamyl-tRNA(Gln) amidotransferase subunit A.